The primary structure comprises 137 residues: MLQPKKTKFRKAHKGRVHGLAYRGSSLSFGQFGLKAMATARITARQIEAARRAMTRHIKRGGRVWIRIFPDVPVSQKPAEVRQGKGKGSPEFWIARVKPGRILYEMEGVDEQLAREAMQRAAAKLPVKTKFIVREGG.

It belongs to the universal ribosomal protein uL16 family. In terms of assembly, part of the 50S ribosomal subunit.

In terms of biological role, binds 23S rRNA and is also seen to make contacts with the A and possibly P site tRNAs. This chain is Large ribosomal subunit protein uL16, found in Magnetococcus marinus (strain ATCC BAA-1437 / JCM 17883 / MC-1).